We begin with the raw amino-acid sequence, 460 residues long: Argininosuccinate lyase (460 aa).

This sequence belongs to the lyase 1 family. Argininosuccinate lyase subfamily.

It is found in the cytoplasm. The catalysed reaction is 2-(N(omega)-L-arginino)succinate = fumarate + L-arginine. Its pathway is amino-acid biosynthesis; L-arginine biosynthesis; L-arginine from L-ornithine and carbamoyl phosphate: step 3/3. This is Argininosuccinate lyase from Leuconostoc mesenteroides subsp. mesenteroides (strain ATCC 8293 / DSM 20343 / BCRC 11652 / CCM 1803 / JCM 6124 / NCDO 523 / NBRC 100496 / NCIMB 8023 / NCTC 12954 / NRRL B-1118 / 37Y).